Here is a 124-residue protein sequence, read N- to C-terminus: uncharacterized protein (124 aa).

The protein resides in the plastid. It is found in the chloroplast. This is an uncharacterized protein from Chlamydomonas reinhardtii (Chlamydomonas smithii).